The sequence spans 479 residues: Ribulose bisphosphate carboxylase large chain 2 (479 aa).

Residues asparagine 116 and threonine 166 each coordinate substrate. The active-site Proton acceptor is the lysine 168. Residue lysine 170 participates in substrate binding. Positions 194, 196, and 197 each coordinate Mg(2+). Lysine 194 carries the post-translational modification N6-carboxylysine. Catalysis depends on histidine 287, which acts as the Proton acceptor. 3 residues coordinate substrate: arginine 288, histidine 320, and serine 372.

This sequence belongs to the RuBisCO large chain family. Type I subfamily. In terms of assembly, heterohexadecamer of 8 large chains and 8 small chains. The cofactor is Mg(2+).

The enzyme catalyses 2 (2R)-3-phosphoglycerate + 2 H(+) = D-ribulose 1,5-bisphosphate + CO2 + H2O. The catalysed reaction is D-ribulose 1,5-bisphosphate + O2 = 2-phosphoglycolate + (2R)-3-phosphoglycerate + 2 H(+). In terms of biological role, ruBisCO catalyzes two reactions: the carboxylation of D-ribulose 1,5-bisphosphate, the primary event in carbon dioxide fixation, as well as the oxidative fragmentation of the pentose substrate. Both reactions occur simultaneously and in competition at the same active site. This is Ribulose bisphosphate carboxylase large chain 2 from Bradyrhizobium sp. (strain ORS 278).